We begin with the raw amino-acid sequence, 274 residues long: MAKRPAATSSNDELPFATEEPVADERSFFGGRPQNPTAPNARAALPASLSGPEHYHGHRERLRDRFREQGDTALADYEILELLLFRLIPRRDTKPIAKALIDRFGSLSGVFGAPAGLLTEVKGVGENVALDLKLISTVAHRTLKSEIRSKQVLSSWSSVIQYCHAAMAHETREQFRILFLDKRNVLIADEVQGRGTVDHTPVYPREVVKRALELSATAIILVHNHPSGDPTPSRADIDMTKVIIEAAKALDITVHDHIIIGKDGHVSLKGLKLI.

The disordered stretch occupies residues 1–57 (MAKRPAATSSNDELPFATEEPVADERSFFGGRPQNPTAPNARAALPASLSGPEHYHG). An MPN domain is found at 152–274 (VLSSWSSVIQ…HVSLKGLKLI (123 aa)). 3 residues coordinate Zn(2+): H223, H225, and D236. A JAMM motif motif is present at residues 223–236 (HNHPSGDPTPSRAD).

Belongs to the UPF0758 family.

In Rhizobium etli (strain CIAT 652), this protein is UPF0758 protein RHECIAT_CH0001935.